We begin with the raw amino-acid sequence, 908 residues long: Low affinity vacuolar monovalent cation/H(+) antiporter (908 aa).

The span at 1–15 (MAKNNHISASGNSTS) shows a compositional bias: polar residues. Residues 1 to 20 (MAKNNHISASGNSTSGDHRL) form a disordered region. At 1-244 (MAKNNHISAS…WEVTCSNVLW (244 aa)) the chain is on the cytoplasmic side. Threonine 26 is modified (phosphothreonine). Serine 32 is modified (phosphoserine). Threonine 33 is subject to Phosphothreonine. A disordered region spans residues 68-147 (NKSKRSVSSQ…DDEDANDDSR (80 aa)). A compositionally biased stretch (low complexity) spans 73–87 (SVSSQSPIVHSSNNT). Positions 102-121 (ESLSSKSHSVPDLNTATPSS) are enriched in polar residues. Serine 110 carries the phosphoserine modification. Phosphothreonine is present on threonine 118. Serine 121 carries the phosphoserine modification. The helical transmembrane segment at 245 to 265 (FILFGFPIAILFYSAAIVVFL) threads the bilayer. Over 266–408 (LGGGGLVTNS…GRVLFYTIFH (143 aa)) the chain is Vacuolar. N-linked (GlcNAc...) asparagine glycosylation occurs at asparagine 361. Residues 409 to 429 (LVLQPILAVLSLCLWLLVFTI) traverse the membrane as a helical segment. The Cytoplasmic segment spans residues 430–494 (PMSNVLWQIM…HYYKYTVDGT (65 aa)). A helical transmembrane segment spans residues 495 to 515 (NVIVVNLISIVFFTIFDFYVL). Residues 516 to 530 (KNFLHWKTWFTYESS) lie on the Vacuolar side of the membrane. A helical membrane pass occupies residues 531-551 (IFILCLTSTIPLAFYIGQAVA). At 552-560 (SISAQTSMG) the chain is on the cytoplasmic side. Residues 561–581 (VGAVINAFFSTIVEIFLYCVA) form a helical membrane-spanning segment. The Vacuolar segment spans residues 582-587 (LQQKKG). Residues 588–608 (LLVEGSMIGSILGAVLLLPGL) traverse the membrane as a helical segment. The Cytoplasmic segment spans residues 609–626 (SMCGGALNRKTQRYNPAS). Residues 627–647 (AGVSSALLIFSMIVMFVPTVL) traverse the membrane as a helical segment. Residues 648–686 (YEIYGGYSVNCADGANDRDCTFSHPPLKFNRLFTHVIQP) lie on the Vacuolar side of the membrane. The chain crosses the membrane as a helical span at residues 687–707 (MSISCAIVLFCAYIIGLWFTL). Topologically, residues 708–746 (RTHAKMIWQLPIADPTSTAPEQQEQNSHDAPNWSRSKST) are cytoplasmic. The chain crosses the membrane as a helical span at residues 747 to 767 (CILLMSTLLYAIIAEILVSCV). Residues 768 to 783 (DAVLEDIPSLNPKFLG) are Vacuolar-facing. A helical transmembrane segment spans residues 784-804 (LTIFALIPNTTEFLNAISFAI). At 805–816 (HGNVALSMEIGS) the chain is on the cytoplasmic side. A helical membrane pass occupies residues 817–837 (AYALQVCLLQIPSLVIYSIFY). The Vacuolar segment spans residues 838–851 (TWNVKKSMINIRTQ). Residues 852–872 (MFPLVFPRWDIFGAMTSVFMF) traverse the membrane as a helical segment. At 873–885 (TYLYAEGKSNYFK) the chain is on the cytoplasmic side. A helical transmembrane segment spans residues 886 to 906 (GSMLILLYIIIVVGFYFQGAL). The Vacuolar segment spans residues 907–908 (SE).

It belongs to the Ca(2+):cation antiporter (CaCA) (TC 2.A.19) family.

It localises to the vacuole membrane. In terms of biological role, has a role in promoting intracellular monovalent cation sequestration via the exchange of monovalent cations and especially Na(+) for hydrogen ions across the vacuolar membrane. The polypeptide is Low affinity vacuolar monovalent cation/H(+) antiporter (VNX1) (Saccharomyces cerevisiae (strain ATCC 204508 / S288c) (Baker's yeast)).